The primary structure comprises 140 residues: MPLPEPSEQEGESVKAGQEPSSKPGTEVVPAAPRKPREFSKLVLLTASKDSTKVAGAKRKGVHCVMSLGVPGPATLAKALLQTHPEAQRAIEAAPQEPEQKRSRQDPGADRTEDSGLAAGPPEAAGENSAPCSVAPGKSL.

Disordered stretches follow at residues 1 to 39 (MPLPEPSEQEGESVKAGQEPSSKPGTEVVPAAPRKPREF) and 83 to 140 (THPE…GKSL). The residue at position 21 (S21) is a Phosphoserine. Residues 98-114 (PEQKRSRQDPGADRTED) show a composition bias toward basic and acidic residues. Residues 118–127 (AAGPPEAAGE) are compositionally biased toward low complexity.

This chain is FLYWCH family member 2 (FLYWCH2), found in Pongo abelii (Sumatran orangutan).